The primary structure comprises 316 residues: MANLKEIRDRIVSVKNTRKITEAMRLVAAAKVRRAQDQVLKSRPFADKLARVLENIQSRVQFEAVDSPLLSKREVKSISLVCITADRGLCGGYNTNIIKKVEIRYAELVKQGFQPNLILVGKKAIGFFQNRKDRYVIKSTFKELEQVPTVKDSEGITNEILAEFLSENSDRVEIIYTKFITLVSCAPVVQTLLPLDPQGIAEENDEIFRLTTKDSKLLVEKSNIEKSDSEKLPSDIVFEQSPDQLLDSLLPLYLQNQVLRALQESAASELACRMTAMNNASDNAKELASTLNLTYNKARQAAITQEILEVVGGSVV.

The protein belongs to the ATPase gamma chain family. As to quaternary structure, F-type ATPases have 2 components, CF(1) - the catalytic core - and CF(0) - the membrane proton channel. CF(1) has five subunits: alpha(3), beta(3), gamma(1), delta(1), epsilon(1). CF(0) has three main subunits: a, b and c.

It is found in the cellular thylakoid membrane. Produces ATP from ADP in the presence of a proton gradient across the membrane. The gamma chain is believed to be important in regulating ATPase activity and the flow of protons through the CF(0) complex. The protein is ATP synthase gamma chain of Prochlorococcus marinus (strain MIT 9215).